The chain runs to 347 residues: Holliday junction branch migration complex subunit RuvB (347 aa).

The interval 13-195 is large ATPase domain (RuvB-L); that stretch reads NEDAVTSGEV…FGIVEHMQYY (183 aa). Residues Leu34, Arg35, Gly76, Lys79, Thr80, Thr81, 142-144, Arg185, Tyr195, and Arg232 each bind ATP; that span reads EDY. A Mg(2+)-binding site is contributed by Thr80. The segment at 196 to 266 is small ATPAse domain (RuvB-S); it reads TIDELEKIVQ…TTEGALKQLQ (71 aa). The head domain (RuvB-H) stretch occupies residues 269 to 347; sequence DEGLDQTDRR…QLGLPVPGDK (79 aa). Arg329 serves as a coordination point for DNA.

The protein belongs to the RuvB family. Homohexamer. Forms an RuvA(8)-RuvB(12)-Holliday junction (HJ) complex. HJ DNA is sandwiched between 2 RuvA tetramers; dsDNA enters through RuvA and exits via RuvB. An RuvB hexamer assembles on each DNA strand where it exits the tetramer. Each RuvB hexamer is contacted by two RuvA subunits (via domain III) on 2 adjacent RuvB subunits; this complex drives branch migration. In the full resolvosome a probable DNA-RuvA(4)-RuvB(12)-RuvC(2) complex forms which resolves the HJ.

Its subcellular location is the cytoplasm. It catalyses the reaction ATP + H2O = ADP + phosphate + H(+). Its function is as follows. The RuvA-RuvB-RuvC complex processes Holliday junction (HJ) DNA during genetic recombination and DNA repair, while the RuvA-RuvB complex plays an important role in the rescue of blocked DNA replication forks via replication fork reversal (RFR). RuvA specifically binds to HJ cruciform DNA, conferring on it an open structure. The RuvB hexamer acts as an ATP-dependent pump, pulling dsDNA into and through the RuvAB complex. RuvB forms 2 homohexamers on either side of HJ DNA bound by 1 or 2 RuvA tetramers; 4 subunits per hexamer contact DNA at a time. Coordinated motions by a converter formed by DNA-disengaged RuvB subunits stimulates ATP hydrolysis and nucleotide exchange. Immobilization of the converter enables RuvB to convert the ATP-contained energy into a lever motion, pulling 2 nucleotides of DNA out of the RuvA tetramer per ATP hydrolyzed, thus driving DNA branch migration. The RuvB motors rotate together with the DNA substrate, which together with the progressing nucleotide cycle form the mechanistic basis for DNA recombination by continuous HJ branch migration. Branch migration allows RuvC to scan DNA until it finds its consensus sequence, where it cleaves and resolves cruciform DNA. The protein is Holliday junction branch migration complex subunit RuvB of Lactobacillus helveticus (strain DPC 4571).